Consider the following 170-residue polypeptide: Peptide deformylase 1 (170 aa).

C91 and H133 together coordinate Fe cation. E134 is a catalytic residue. H137 is a Fe cation binding site.

It belongs to the polypeptide deformylase family. Fe(2+) serves as cofactor.

The enzyme catalyses N-terminal N-formyl-L-methionyl-[peptide] + H2O = N-terminal L-methionyl-[peptide] + formate. Its function is as follows. Removes the formyl group from the N-terminal Met of newly synthesized proteins. Requires at least a dipeptide for an efficient rate of reaction. N-terminal L-methionine is a prerequisite for activity but the enzyme has broad specificity at other positions. The sequence is that of Peptide deformylase 1 from Vibrio vulnificus (strain CMCP6).